The following is a 678-amino-acid chain: Probable E3 ubiquitin ligase complex SCF subunit sconB (678 aa).

Residues 1 to 52 (MSTEDNHDSQILTARHRSDASEQSFKSLFGGPSSEDGKETEPDTHDHNHSFS) are disordered. Over residues 35–49 (EDGKETEPDTHDHNH) the composition is skewed to basic and acidic residues. The F-box domain maps to 178–224 (IDFITALPPEIAFKILCYLDTTSLCKASQVSRGWRALADDDVVWHRM). Residues 266–287 (VVGPRSPDASAESPPSGKRKLE) form a disordered region. 8 WD repeats span residues 347–375 (GHTN…KIWD), 387–415 (GHES…KVWN), 427–455 (GHRG…KIWN), 466–496 (GHTD…RLWD), 508–543 (GHVG…TSGD), 553–595 (MGLE…RLWE), 607–635 (GHLE…KIWD), and 647–675 (GHSG…RMYS).

This sequence belongs to the WD repeat MET30/SCONB/SCON-2 family. In terms of assembly, component of the SCF(sconB) E3 ubiquitin ligase complex.

The protein operates within protein modification; protein ubiquitination. In terms of biological role, component of the SCF(sconB) E3 ubiquitin ligase complex involved in the regulation of sulfur metabolite repression, probably by mediating the inactivation or degradation of the metR transcription factor. The chain is Probable E3 ubiquitin ligase complex SCF subunit sconB (sconB) from Emericella nidulans (strain FGSC A4 / ATCC 38163 / CBS 112.46 / NRRL 194 / M139) (Aspergillus nidulans).